Reading from the N-terminus, the 166-residue chain is Lipoprotein signal peptidase (166 aa).

Helical transmembrane passes span 12–32, 70–90, and 102–122; these read WLWV…LILQ, WFFS…MYRS, and ALII…GFVV. Active-site residues include Asp123 and Asp141. A helical membrane pass occupies residues 137–157; the sequence is FNLADSAICIGAALIVLEGFL.

The protein belongs to the peptidase A8 family.

It is found in the cell inner membrane. The catalysed reaction is Release of signal peptides from bacterial membrane prolipoproteins. Hydrolyzes -Xaa-Yaa-Zaa-|-(S,diacylglyceryl)Cys-, in which Xaa is hydrophobic (preferably Leu), and Yaa (Ala or Ser) and Zaa (Gly or Ala) have small, neutral side chains.. It participates in protein modification; lipoprotein biosynthesis (signal peptide cleavage). Functionally, this protein specifically catalyzes the removal of signal peptides from prolipoproteins. The chain is Lipoprotein signal peptidase from Klebsiella pneumoniae subsp. pneumoniae (strain ATCC 700721 / MGH 78578).